A 277-amino-acid polypeptide reads, in one-letter code: Energy-coupling factor transporter ATP-binding protein EcfA (277 aa).

Residues 4–238 (LETRDLTHIY…PELLTQTRLD (235 aa)) enclose the ABC transporter domain. 37-44 (GPNGAGKS) is a binding site for ATP.

The protein belongs to the ABC transporter superfamily. Energy-coupling factor EcfA family. In terms of assembly, forms a stable energy-coupling factor (ECF) transporter complex composed of 2 membrane-embedded substrate-binding proteins (S component), 2 ATP-binding proteins (A component) and 2 transmembrane proteins (T component).

The protein localises to the cell membrane. ATP-binding (A) component of a common energy-coupling factor (ECF) ABC-transporter complex. Unlike classic ABC transporters this ECF transporter provides the energy necessary to transport a number of different substrates. The chain is Energy-coupling factor transporter ATP-binding protein EcfA from Methanoculleus marisnigri (strain ATCC 35101 / DSM 1498 / JR1).